The chain runs to 260 residues: Aspartate/glutamate leucyltransferase (260 aa).

It belongs to the R-transferase family. Bpt subfamily.

It is found in the cytoplasm. It carries out the reaction N-terminal L-glutamyl-[protein] + L-leucyl-tRNA(Leu) = N-terminal L-leucyl-L-glutamyl-[protein] + tRNA(Leu) + H(+). The enzyme catalyses N-terminal L-aspartyl-[protein] + L-leucyl-tRNA(Leu) = N-terminal L-leucyl-L-aspartyl-[protein] + tRNA(Leu) + H(+). In terms of biological role, functions in the N-end rule pathway of protein degradation where it conjugates Leu from its aminoacyl-tRNA to the N-termini of proteins containing an N-terminal aspartate or glutamate. The sequence is that of Aspartate/glutamate leucyltransferase from Sphingomonas elodea.